Consider the following 433-residue polypeptide: O-methyltransferase VdtC (433 aa).

Residue aspartate 284 participates in S-adenosyl-L-methionine binding. Histidine 335 acts as the Proton acceptor in catalysis.

Belongs to the class I-like SAM-binding methyltransferase superfamily. Cation-independent O-methyltransferase family. COMT subfamily.

The catalysed reaction is 7,9,10-trihydroxy-3-(2-oxopropyl)-1H-benzo[g]isochromen-1-one + S-adenosyl-L-methionine = 9,10-dihydroxy-7-methoxy-3-(2-oxopropyl)-1H-benzo[g]isochromen-1-one + S-adenosyl-L-homocysteine + H(+). It participates in secondary metabolite biosynthesis. Its function is as follows. O-methyltransferase; part of the gene cluster that mediates the biosynthesis of viriditoxin, one of the 'classical' secondary metabolites produced by fungi and that has antibacterial activity. The first step is performed by the polyketide synthase VdtA which condenses one acetyl-CoA and 6 malonyl-CoA units to form the heptaketide monomer backbone of viriditoxin. The product of VdtA is then O-methylated on C7 by the O-methyltransferase VdtC. The O-methyl group is important for the stereoselective coupling of the monomers at the final step of viriditoxin biosynthesis. The short-chain dehydrogenase/reductase VdtF then acts as a stereospecific reductase converting the pyrone to dihydropyrone via the reduction of the C3-C4 double bond. The FAD-binding monooxygenase VdtE then converts the ketone group into a methyl-ester group to yield semi-viriditoxin. Finally, the laccase VdtB is involved in dimerization of 2 semi-viriditoxin molecules to yield the final viriditoxin. VdtB is responsible for the regioselective 6,6'-coupling of semi-viriditoxin, which yields (M)-viriditoxin and (P)-viriditoxin at a ratio of 1:2. The non-catalytic carboxylesterase-like protein VdtD affects the stereochemistical outcome of the coupling. The highly reducing polyketide synthase VdtX is not involved in viriditoxin synthesis, but might possibly play a role in the production of additional metabolites not identified yet. The chain is O-methyltransferase VdtC from Byssochlamys spectabilis (Paecilomyces variotii).